The following is a 218-amino-acid chain: uncharacterized protein (218 aa).

This is an uncharacterized protein from Mycoplasma pneumoniae (strain ATCC 29342 / M129 / Subtype 1) (Mycoplasmoides pneumoniae).